The following is a 217-amino-acid chain: GrpE protein homolog 1, mitochondrial (217 aa).

The transit peptide at 1–27 (MAAQCVRLARRSLPALALSLRPSPRLL) directs the protein to the mitochondrion. The tract at residues 29–56 (TATKQKNSGQNLEEDMGQSEQKADPPAT) is disordered. Residues 30-39 (ATKQKNSGQN) show a composition bias toward polar residues. Position 94 is an N6-acetyllysine; alternate (lysine 94). Lysine 94 bears the N6-succinyllysine; alternate mark. Lysine 100 bears the N6-acetyllysine mark. Position 120 is an N6-succinyllysine (lysine 120). An N6-acetyllysine; alternate modification is found at lysine 215. At lysine 215 the chain carries N6-succinyllysine; alternate.

Belongs to the GrpE family. Probable component of the PAM complex at least composed of a mitochondrial HSP70 protein, GRPEL1 or GRPEL2, TIMM44, TIMM16/PAM16 and TIMM14/DNAJC19. Binds to HSP70, HSC70 and HSJ1B.

It is found in the mitochondrion matrix. Its function is as follows. Essential component of the PAM complex, a complex required for the translocation of transit peptide-containing proteins from the inner membrane into the mitochondrial matrix in an ATP-dependent manner. Seems to control the nucleotide-dependent binding of mitochondrial HSP70 to substrate proteins. This chain is GrpE protein homolog 1, mitochondrial (GRPEL1), found in Homo sapiens (Human).